The primary structure comprises 43 residues: Subtilosin-A (43 aa).

Residues 1-8 constitute a propeptide that is removed on maturation; it reads MKKAVIVE. The segment at residues 9–43 is a cross-link (cyclopeptide (Asn-Gly)); it reads NKGCATCSIGAACLVDGPIPDFEIAGATGLFGLWG. Residues 12–39 constitute a cross-link (2-cysteinyl-D-phenylalanine (Cys-Phe)); it reads CATCSIGAACLVDGPIPDFEIAGATGLF. A cross-link (2-cysteinyl-D-allo-threonine (Cys-Thr)) is located at residues 15–36; sequence CSIGAACLVDGPIPDFEIAGAT. Residues 21–30 constitute a cross-link (2-cysteinyl-L-phenylalanine (Cys-Phe)); that stretch reads CLVDGPIPDF.

Belongs to the bacteriocin class V family. In terms of processing, this sactipeptide undergoes unique processing steps that include proteolytic cleavage after Glu-8, and covalent linkage of the alpha-amino of Asn-9 with the carboxyl of Gly-43 to form a cyclopeptide. Thioether cross-links are formed between cysteines and the alpha-carbons of other amino acids, Cys-12 to Phe-39, Cys-15 to Thr-36, and Cys-21 to Phe-30. In forming these cross-links, Thr-36 and Phe-39 are converted to D-amino acids. Propeptide cleavage and cyclopeptide formation only occur after all 3 thioether cross-links are formed.

It localises to the secreted. Has bacteriocidal activity against some Gram-positive bacteria such as Listeria, some species of Bacillus and E.faecium. A single mutation (Thr-14-Ile) confers hemolytic activity against rabbit and human blood. This Bacillus subtilis (strain 168) protein is Subtilosin-A (sboA).